We begin with the raw amino-acid sequence, 712 residues long: Anaerobic ribonucleoside-triphosphate reductase (712 aa).

Residues 3-92 (PHVMKRDGCK…EYRHDRDIQR (90 aa)) enclose the ATP-cone domain. The Glycine radical domain maps to 583 to 708 (KKVNPYDKID…VKRRVKHLGN (126 aa)). Zn(2+)-binding residues include C644, C647, C662, and C665. Position 681 is a glycine radical (G681).

This sequence belongs to the anaerobic ribonucleoside-triphosphate reductase family. In terms of assembly, forms a tetramer composed of two NrdD and two NrdG subunits.

The catalysed reaction is a ribonucleoside 5'-triphosphate + formate + H(+) = a 2'-deoxyribonucleoside 5'-triphosphate + CO2 + H2O. Its activity is regulated as follows. Activated under anaerobic conditions by NrdG, a tightly associated activase. Activation involves the formation of a glycyl radical at Gly-681. Catalyzes the conversion of ribonucleotides into deoxyribonucleotides, which are required for DNA synthesis and repair. In Salmonella typhimurium (strain LT2 / SGSC1412 / ATCC 700720), this protein is Anaerobic ribonucleoside-triphosphate reductase (nrdD).